The primary structure comprises 1175 residues: 1-phosphatidylinositol 4,5-bisphosphate phosphodiesterase beta-4 (1175 aa).

Position 2 is an N-acetylalanine (alanine 2). Residues 313 to 463 (QEMDHPLAHY…LKRKILIKNK (151 aa)) enclose the PI-PLC X-box domain. Catalysis depends on residues histidine 328 and histidine 375. The segment at 482 to 511 (EAGESASPANILEDDNEEEIESADQEEEAH) is disordered. Positions 493–508 (LEDDNEEEIESADQEE) are enriched in acidic residues. One can recognise a PI-PLC Y-box domain in the interval 565–681 (LSTMINYAQP…GYLLKPDFMR (117 aa)). The region spanning 684-809 (DRTFDPFSET…SLRNEGNKPL (126 aa)) is the C2 domain. 2 disordered regions span residues 863-895 (ADVPSDTSKNDKKGKANTAKANVTPQSSSELRP) and 1082-1110 (KISMENSKAISQDKSIKNKAERERRVREL). Composition is skewed to polar residues over residues 881–895 (AKANVTPQSSSELRP) and 1085–1094 (MENSKAISQD). Threonine 886 bears the Phosphothreonine mark. Over residues 1095–1109 (KSIKNKAERERRVRE) the composition is skewed to basic and acidic residues.

Ca(2+) is required as a cofactor. In terms of tissue distribution, preferentially expressed in the retina.

It is found in the cell membrane. It catalyses the reaction a 1,2-diacyl-sn-glycero-3-phospho-(1D-myo-inositol-4,5-bisphosphate) + H2O = 1D-myo-inositol 1,4,5-trisphosphate + a 1,2-diacyl-sn-glycerol + H(+). The catalysed reaction is a 1,2-diacyl-sn-glycero-3-phospho-(1D-myo-inositol) + H2O = 1D-myo-inositol 1-phosphate + a 1,2-diacyl-sn-glycerol + H(+). Functionally, activated phosphatidylinositol-specific phospholipase C enzymes catalyze the production of the second messenger molecules diacylglycerol (DAG) and inositol 1,4,5-trisphosphate (IP3) involved in G-protein coupled receptor signaling pathways. PLCB4 is a direct effector of the endothelin receptor signaling pathway that plays an essential role in lower jaw and middle ear structures development. This chain is 1-phosphatidylinositol 4,5-bisphosphate phosphodiesterase beta-4, found in Homo sapiens (Human).